Here is a 97-residue protein sequence, read N- to C-terminus: uncharacterized protein (97 aa).

S2 carries the post-translational modification N-acetylserine.

This is an uncharacterized protein from Mycobacterium tuberculosis (strain ATCC 25618 / H37Rv).